The sequence spans 158 residues: C-type lectin BML-1 (158 aa).

The first 23 residues, M1–C23, serve as a signal peptide directing secretion. 4 cysteine pairs are disulfide-bonded: C26–C37, C54–C154, C61–C156, and C129–C146. The region spanning K33 to Q155 is the C-type lectin domain. Residues Q119, D121, and E127 each coordinate Ca(2+). The short motif at Q119–D121 is the Galactose-binding element. N134 is a glycosylation site (N-linked (GlcNAc...) asparagine). The Ca(2+) site is built by N142 and D143.

The protein belongs to the true venom lectin family. As to quaternary structure, homodimer; non-covalently linked. In terms of tissue distribution, expressed by the venom gland.

Its subcellular location is the secreted. Its function is as follows. Recombinant C-type lectin BML-1 is able to agglutinate erythrocytes. May be a calcium-dependent lectin. In Bungarus multicinctus (Many-banded krait), this protein is C-type lectin BML-1.